Consider the following 187-residue polypeptide: Adenylate kinase (187 aa).

Gly-11–Thr-16 provides a ligand contact to ATP. Positions Ser-31–Val-60 are NMP. Residues Thr-32, Arg-37, Asp-58–Val-60, Gly-86–Arg-89, and Gln-93 contribute to the AMP site. The segment at Gly-127–Asp-137 is LID. Position 128 (Arg-128) interacts with ATP. AMP is bound by residues Arg-134 and Arg-145. Gly-173 serves as a coordination point for ATP.

The protein belongs to the adenylate kinase family. Monomer.

It localises to the cytoplasm. It carries out the reaction AMP + ATP = 2 ADP. It participates in purine metabolism; AMP biosynthesis via salvage pathway; AMP from ADP: step 1/1. Its function is as follows. Catalyzes the reversible transfer of the terminal phosphate group between ATP and AMP. Plays an important role in cellular energy homeostasis and in adenine nucleotide metabolism. The sequence is that of Adenylate kinase from Leptospira borgpetersenii serovar Hardjo-bovis (strain JB197).